Consider the following 356-residue polypeptide: MSNSTSTPNTGLSYKDAGVDIEAGDALVDRIKSVAKRTTRPEVMGGLGGFGALCKIPKGYEEPVLVSGTDGVGTKLRLALNLNRHDTIGQDLVAMCVNDLLVCGAEPLFFLDYYATGHLNVDVAANVVTGIGKGCELAGCALVGGETAEMPGMYEGEDYDLAGFAVGVVEQSKIIDGSKVKSGDVLIGVASSGAHSNGYSLLRKILDVKNVDLTQVIDGRPLADVAMEPTRIYVKPVLELCKQVDVHAMAHITGGGLPGNLPRVLPNGAQAVINEASWEWPELFKLLQREGNVERFEMYRTFNCGVGMVIAVDANDAEKAIEVLNAQGEKAWKIGHIQENAESVEGADEKIRVIFE.

The protein belongs to the AIR synthase family.

It is found in the cytoplasm. The catalysed reaction is 2-formamido-N(1)-(5-O-phospho-beta-D-ribosyl)acetamidine + ATP = 5-amino-1-(5-phospho-beta-D-ribosyl)imidazole + ADP + phosphate + H(+). It participates in purine metabolism; IMP biosynthesis via de novo pathway; 5-amino-1-(5-phospho-D-ribosyl)imidazole from N(2)-formyl-N(1)-(5-phospho-D-ribosyl)glycinamide: step 2/2. This Acinetobacter baumannii (strain AB307-0294) protein is Phosphoribosylformylglycinamidine cyclo-ligase.